The following is a 360-amino-acid chain: NAD(P)H-quinone oxidoreductase subunit 1, chloroplastic (360 aa).

The next 8 membrane-spanning stretches (helical) occupy residues Trp-29–Val-49, Ile-96–Val-116, Ile-128–Met-148, Ala-166–Leu-186, Ile-204–Leu-224, Gly-255–Leu-277, Ile-297–Leu-317, and Leu-333–Ala-353.

This sequence belongs to the complex I subunit 1 family. NDH is composed of at least 16 different subunits, 5 of which are encoded in the nucleus.

It localises to the plastid. The protein localises to the chloroplast thylakoid membrane. The catalysed reaction is a plastoquinone + NADH + (n+1) H(+)(in) = a plastoquinol + NAD(+) + n H(+)(out). The enzyme catalyses a plastoquinone + NADPH + (n+1) H(+)(in) = a plastoquinol + NADP(+) + n H(+)(out). NDH shuttles electrons from NAD(P)H:plastoquinone, via FMN and iron-sulfur (Fe-S) centers, to quinones in the photosynthetic chain and possibly in a chloroplast respiratory chain. The immediate electron acceptor for the enzyme in this species is believed to be plastoquinone. Couples the redox reaction to proton translocation, and thus conserves the redox energy in a proton gradient. The polypeptide is NAD(P)H-quinone oxidoreductase subunit 1, chloroplastic (Chlorokybus atmophyticus (Soil alga)).